Here is a 246-residue protein sequence, read N- to C-terminus: Probable transcriptional regulatory protein Teth39_1009 (246 aa).

Positions 1-21 (MSGHSKWANIKHKKEKMDAKK) are disordered.

The protein belongs to the TACO1 family.

It is found in the cytoplasm. This Thermoanaerobacter pseudethanolicus (strain ATCC 33223 / 39E) (Clostridium thermohydrosulfuricum) protein is Probable transcriptional regulatory protein Teth39_1009.